The sequence spans 241 residues: Octanoyltransferase (241 aa).

The 190-residue stretch at 38-227 (AGGPDTLLLL…AVCNALDGAL (190 aa)) folds into the BPL/LPL catalytic domain. Substrate contacts are provided by residues 85–92 (RGGKITWH), 157–159 (AIG), and 170–172 (GFA). Cys188 acts as the Acyl-thioester intermediate in catalysis.

It belongs to the LipB family.

It is found in the cytoplasm. The enzyme catalyses octanoyl-[ACP] + L-lysyl-[protein] = N(6)-octanoyl-L-lysyl-[protein] + holo-[ACP] + H(+). It functions in the pathway protein modification; protein lipoylation via endogenous pathway; protein N(6)-(lipoyl)lysine from octanoyl-[acyl-carrier-protein]: step 1/2. Its function is as follows. Catalyzes the transfer of endogenously produced octanoic acid from octanoyl-acyl-carrier-protein onto the lipoyl domains of lipoate-dependent enzymes. Lipoyl-ACP can also act as a substrate although octanoyl-ACP is likely to be the physiological substrate. The protein is Octanoyltransferase of Mycobacterium marinum (strain ATCC BAA-535 / M).